The chain runs to 158 residues: Putative pre-16S rRNA nuclease (158 aa).

This sequence belongs to the YqgF nuclease family.

It localises to the cytoplasm. In terms of biological role, could be a nuclease involved in processing of the 5'-end of pre-16S rRNA. In Acidiphilium cryptum (strain JF-5), this protein is Putative pre-16S rRNA nuclease.